A 231-amino-acid chain; its full sequence is Beta-casein (231 aa).

The first 15 residues, Met1–Ala15, serve as a signal peptide directing secretion. Phosphoserine is present on Ser24. Residue Thr27 is modified to Phosphothreonine. 3 positions are modified to phosphoserine: Ser29, Ser31, and Ser32.

This sequence belongs to the beta-casein family. As to expression, mammary gland specific. Secreted in milk.

The protein resides in the secreted. Functionally, important role in determination of the surface properties of the casein micelles. This is Beta-casein (Csn2) from Rattus norvegicus (Rat).